A 135-amino-acid chain; its full sequence is Transcription antitermination protein NusB (135 aa).

The disordered stretch occupies residues Ala115–Ser135.

This sequence belongs to the NusB family.

Its function is as follows. Involved in transcription antitermination. Required for transcription of ribosomal RNA (rRNA) genes. Binds specifically to the boxA antiterminator sequence of the ribosomal RNA (rrn) operons. This is Transcription antitermination protein NusB from Frankia casuarinae (strain DSM 45818 / CECT 9043 / HFP020203 / CcI3).